Reading from the N-terminus, the 241-residue chain is Tumor necrosis factor ligand superfamily member 13 (241 aa).

The propeptide occupies 1–95 (MPASSPGHMG…KDGAKSRRRR (95 aa)). The 135-residue stretch at 107–241 (SVLHLVPVNI…HGTFLGFVKL (135 aa)) folds into the THD domain. The N-linked (GlcNAc...) asparagine glycan is linked to asparagine 115. The cysteines at positions 187 and 202 are disulfide-linked.

Belongs to the tumor necrosis factor family. Homotrimer. In terms of processing, the soluble form derives from the membrane form by proteolytic processing.

Its subcellular location is the secreted. Cytokine that binds to TNFRSF13B/TACI and to TNFRSF17/BCMA. Plays a role in the regulation of tumor cell growth. May be involved in monocyte/macrophage-mediated immunological processes. The polypeptide is Tumor necrosis factor ligand superfamily member 13 (Tnfsf13) (Mus musculus (Mouse)).